A 642-amino-acid polypeptide reads, in one-letter code: Forkhead box protein K2 (642 aa).

Positions 30 to 91 (VTIGRNSSQG…NGVFVDGVFQ (62 aa)) constitute an FHA domain. The interval 201 to 221 (QSENDKDASGGDSPKDDSKPP) is disordered. The span at 203-219 (ENDKDASGGDSPKDDSK) shows a compositional bias: basic and acidic residues. A DNA-binding region (fork-head) is located at residues 219–314 (KPPYSYAQLI…EQAFRKRRPR (96 aa)). The segment at 261 to 279 (KGWQNSIRHNLSLNRYFIK) is DNA-binding; major groove. Mg(2+) is bound by residues L271, S272, N274, and F277. DNA-binding; minor groove regions lie at residues 289-293 (KGSFW) and 309-314 (RKRRPR). Disordered regions lie at residues 323–359 (LGPLSSRSAPASPNHSGVFSAHSSGVQTPESLSREGS) and 589–615 (ASASLPTKRQNGDQSEQPDIKRGKTDE). Polar residues-rich tracts occupy residues 327 to 353 (SSRSAPASPNHSGVFSAHSSGVQTPES) and 589 to 605 (ASASLPTKRQNGDQSEQ). The span at 606–615 (PDIKRGKTDE) shows a compositional bias: basic and acidic residues.

In terms of tissue distribution, in neurula embryos, expressed strongly in the future floor plate and weakly in the neural crest progenitor cells. As development progresses, expression becomes stronger in neural crest cells. At stage 24, expressed in the eye, brain, branchial arches and in the presomitic mesoderm in the posterior embryo. At stage 29, additionally expressed in the pronephric tubules. At stage 35, expressed in the migrating lateral muscle precursors of the abdomen. Additionally, the developing proctodeum and head structures including the branchial arches, eyes and otic vesicles continue to show expression. Expression also persists in the nephros.

It is found in the nucleus. Its subcellular location is the cytoplasm. In terms of biological role, transcriptional regulator involved in different processes such as glucose metabolism, aerobic glycolysis and autophagy. Recognizes and binds the forkhead DNA sequence motif (5'-GTAAACA-3') and can both act as a transcription activator or repressor, depending on the context. Acts as a key regulator of metabolic reprogramming towards aerobic glycolysis, a process in which glucose is converted to lactate in the presence of oxygen. Acts as a negative regulator of autophagy in skeletal muscle: in response to starvation, enters the nucleus, binds the promoters of autophagy genes and represses their expression, preventing proteolysis of skeletal muscle proteins. The sequence is that of Forkhead box protein K2 from Xenopus laevis (African clawed frog).